We begin with the raw amino-acid sequence, 397 residues long: Elongation factor Tu (397 aa).

The region spanning 10-207 is the tr-type G domain; that stretch reads KPHVNVGTVG…AIDAYVPDPV (198 aa). The segment at 19–26 is G1; sequence GHIDHGKT. 19-26 lines the GTP pocket; the sequence is GHIDHGKT. Threonine 26 lines the Mg(2+) pocket. The G2 stretch occupies residues 60 to 64; sequence GITIA. The interval 81-84 is G3; that stretch reads DCPG. GTP is bound by residues 81–85 and 136–139; these read DCPGH and NKVD. The G4 stretch occupies residues 136-139; the sequence is NKVD. Positions 174 to 176 are G5; the sequence is SAL.

The protein belongs to the TRAFAC class translation factor GTPase superfamily. Classic translation factor GTPase family. EF-Tu/EF-1A subfamily. Monomer.

The protein localises to the cytoplasm. It catalyses the reaction GTP + H2O = GDP + phosphate + H(+). In terms of biological role, GTP hydrolase that promotes the GTP-dependent binding of aminoacyl-tRNA to the A-site of ribosomes during protein biosynthesis. This chain is Elongation factor Tu, found in Syntrophobacter fumaroxidans (strain DSM 10017 / MPOB).